The chain runs to 2671 residues: Inositol 1,4,5-trisphosphate-gated calcium channel ITPR3 (2671 aa).

At 1 to 2202 the chain is on the cytoplasmic side; sequence MSEMSSFLHI…LIYWFSRRMT (2202 aa). MIR domains are found at residues 113–173, 174–224, 232–288, 295–372, and 378–434; these read GDVV…LRSN, GDNV…INLF, EEVL…VEVV, GGAG…LDPT, and DSFV…IVSV. Positions 266, 268, 269, and 270 each coordinate 1D-myo-inositol 1,4,5-trisphosphate. Residues 322 to 342 are disordered; the sequence is SYKGDASDPKAAGMGAQGRTG. 1D-myo-inositol 1,4,5-trisphosphate-binding residues include Arg503, Lys507, Arg510, Tyr567, Arg568, and Lys569. Arg743 contacts Ca(2+). Residues Ser916 and Ser934 each carry the phosphoserine modification. Positions 1122 and 1125 each coordinate Ca(2+). 2 disordered regions span residues 1132–1163 and 1809–1848; these read GSGK…PPGE and NDLG…GPSL. Phosphoserine occurs at positions 1813, 1832, and 1834. 2 residues coordinate Ca(2+): Glu1882 and Glu1946. 3 residues coordinate ATP: Ala1996, Glu2149, and Lys2152. Residues 2203–2223 traverse the membrane as a helical segment; that stretch reads LWGSISFNLAVFINIIIAFFY. The Extracellular portion of the chain corresponds to 2224-2235; the sequence is PYMEGASTGVLD. The chain crosses the membrane as a helical span at residues 2236-2256; the sequence is SPLISLLFWILICFSIAALFT. Topologically, residues 2257–2264 are cytoplasmic; that stretch reads KRYSIRPL. A helical membrane pass occupies residues 2265-2285; it reads IVALILRSIYYLGIGPTLNIL. Residues 2286-2325 lie on the Extracellular side of the membrane; sequence GALNLTNKIVFVVSFVGNRGTFIRGYKAMVMDMEFLYHVG. Residues 2326 to 2346 traverse the membrane as a helical segment; it reads YILTSVLGLFAHELFYSILLF. The Cytoplasmic segment spans residues 2347-2368; the sequence is DLIYREETLFNVIKSVTRNGRS. A helical membrane pass occupies residues 2369 to 2389; sequence ILLTALLALILVYLFSIVGFL. Residues 2390-2496 are Extracellular-facing; it reads FLKDDFILEV…ESLFPARVVY (107 aa). A disulfide bridge links Cys2455 with Cys2461. The helical transmembrane segment at 2497 to 2517 threads the bilayer; sequence DLLFFFIVIIIVLNLIFGVII. The Cytoplasmic portion of the chain corresponds to 2518–2671; that stretch reads DTFADLRSEK…FVDVQNCISR (154 aa). ATP is bound by residues Cys2538 and Phe2539. Cys2538 is a binding site for Zn(2+). Zn(2+) contacts are provided by Cys2541 and His2558. Lys2560, His2563, Asn2564, and Met2565 together coordinate ATP. His2563 serves as a coordination point for Zn(2+). Residue Thr2581 coordinates Ca(2+). 2 positions are modified to phosphoserine: Ser2609 and Ser2670.

The protein belongs to the InsP3 receptor family. As to quaternary structure, homotetramer. Homodimer. Interacts with TRPC1, TRPC3 and TRPC4. Interacts with TRPV4. Interacts with SIGMAR1. Interacts with PML and AKT1. Interacts with IRAG2 (via coiled-coil domain). Interacts with CABP1. Interacts with TMBIM4/LFG4. Interacts with CEMIP. Interacts with TESPA1. Interacts with TMEM203. Interacts with BOK; regulates ITPR3 expression. Interacts with BCL2L10. Interacts with CHGA and CHGB. In terms of processing, phosphorylated by AKT1 on serine and/or threonine residues. As to expression, expressed in intestinal crypt and villus epithelial cells.

Its subcellular location is the endoplasmic reticulum membrane. It localises to the cytoplasmic vesicle. The protein localises to the secretory vesicle membrane. It catalyses the reaction Ca(2+)(in) = Ca(2+)(out). Its activity is regulated as follows. Inositol 1,4,5-trisphosphate-gated calcium channel is regulated by cytosolic calcium in a biphasic manner. At low concentrations, cytosolic calcium binds at a high-affinity juxtamembrane domain (JD) calcium binding site, allowing ITPR3 to activate by escaping a low-energy resting state through an ensemble of preactivated states. At high cytosolic calcium concentrations, ITPR3 preferentially enters an inhibited state stabilized by calcium binding at a second, low-affinity cytoplasmic domain (CD) calcium binding site. In terms of biological role, inositol 1,4,5-trisphosphate-gated calcium channel that, upon 1D-myo-inositol 1,4,5-trisphosphate binding, transports calcium from the endoplasmic reticulum lumen to cytoplasm, thus releasing the intracellular calcium and therefore participates in cellular calcium ion homeostasis. 1D-myo-inositol 1,4,5-trisphosphate binds to the ligand-free channel without altering its global conformation, yielding the low-energy resting state, then progresses through resting-to preactivated transitions to the higher energy preactivated state, which increases affinity for calcium, promoting binding of the low basal cytosolic calcium at the juxtamembrane domain (JD) site, favoring the transition through the ensemble of high-energy intermediate states along the trajectory to the fully-open activated state. Upon opening, releases calcium in the cytosol where it can bind to the low-affinity cytoplasmic domain (CD) site and stabilizes the inhibited state to terminate calcium release. In Homo sapiens (Human), this protein is Inositol 1,4,5-trisphosphate-gated calcium channel ITPR3.